Here is a 299-residue protein sequence, read N- to C-terminus: Ankyrin repeat domain-containing protein 54 (299 aa).

A disordered region spans residues 1–27 (MAATGGGAEDESRSGRSSSEGECAVAP). Ala2 is subject to N-acetylalanine. Ser62 carries the phosphoserine modification. Residues 98 to 116 (RRLGPTGKEVHALKRLRDS) carry the Nuclear localization signal (NLS) motif. 4 ANK repeats span residues 108 to 137 (HALK…DPCA), 141 to 170 (KGRT…DPNQ), 174 to 203 (LGNT…RVDA), and 207 to 239 (AGRT…EVKQ). Residues 140 to 240 (DKGRTALHFA…EAVRLEVKQI (101 aa)) are LYN-binding. The Nuclear export signal (NES) signature appears at 282 to 292 (LLASFTSLSLQ).

Interacts (via ankyrin repeat region) with LYN (via SH3-domain) in an activation-independent status of LYN. Forms a multiprotein complex with LYN and HCLS1. Interacts with TSN2, VAV1, DBNL and LASP1.

The protein localises to the nucleus. Its subcellular location is the cytoplasm. It is found in the midbody. In terms of biological role, plays an important role in regulating intracellular signaling events associated with erythroid terminal differentiation. The polypeptide is Ankyrin repeat domain-containing protein 54 (Ankrd54) (Rattus norvegicus (Rat)).